The chain runs to 142 residues: Large ribosomal subunit protein uL11 (142 aa).

This sequence belongs to the universal ribosomal protein uL11 family. In terms of assembly, part of the ribosomal stalk of the 50S ribosomal subunit. Interacts with L10 and the large rRNA to form the base of the stalk. L10 forms an elongated spine to which L12 dimers bind in a sequential fashion forming a multimeric L10(L12)X complex. Post-translationally, one or more lysine residues are methylated.

Functionally, forms part of the ribosomal stalk which helps the ribosome interact with GTP-bound translation factors. The protein is Large ribosomal subunit protein uL11 of Gamma-proteobacterium EBAC31A08.